The chain runs to 810 residues: Protein kinase C-binding protein NELL1 (810 aa).

The first 21 residues, 1 to 21 (MPMDVILVLWFCVCTARTVLG), serve as a signal peptide directing secretion. 6 N-linked (GlcNAc...) asparagine glycosylation sites follow: asparagine 40, asparagine 53, asparagine 83, asparagine 224, asparagine 294, and asparagine 372. Residues 57 to 227 (AFLFQDVQRE…TQCPNLNRTC (171 aa)) form the Laminin G-like domain. The VWFC 1 domain occupies 271–332 (KTCQVSGLLY…ISGQCCKVCR (62 aa)). Disulfide bonds link cysteine 395–cysteine 407, cysteine 401–cysteine 416, and cysteine 418–cysteine 432. Aspartate 434, isoleucine 435, and glutamate 437 together coordinate Ca(2+). One can recognise an EGF-like 1; calcium-binding domain in the interval 434–475 (DIDECAAKMHYCHANTVCVNLPGLYRCDCVPGYIRVDDFSCT). 15 disulfides stabilise this stretch: cysteine 438-cysteine 451, cysteine 445-cysteine 460, cysteine 462-cysteine 474, cysteine 480-cysteine 493, cysteine 487-cysteine 502, cysteine 504-cysteine 515, cysteine 519-cysteine 529, cysteine 523-cysteine 535, cysteine 537-cysteine 546, cysteine 553-cysteine 566, cysteine 560-cysteine 575, cysteine 577-cysteine 594, cysteine 600-cysteine 613, cysteine 607-cysteine 622, and cysteine 624-cysteine 630. 3 residues coordinate Ca(2+): asparagine 453, leucine 454, and leucine 457. One can recognise an EGF-like 2; calcium-binding domain in the interval 476 to 516 (EHDDCGSGQHNCDKNAICTNTVQGHSCTCQPGYVGNGTICK). The N-linked (GlcNAc...) asparagine glycan is linked to asparagine 511. The EGF-like 3 domain maps to 517 to 547 (AFCEEGCRYGGTCVAPNKCVCPSGFTGSHCE). Residues 549–587 (DIDECAEGFVECHNHSRCVNLPGWYHCECRSGFHDDGTY) enclose the EGF-like 4; calcium-binding domain. The N-linked (GlcNAc...) asparagine glycan is linked to asparagine 562. One can recognise an EGF-like 5; calcium-binding domain in the interval 596 to 631 (DIDECALRTHTCWNDSACINLAGGFDCLCPSGPSCS). N-linked (GlcNAc...) asparagine glycosylation is present at asparagine 609. 2 consecutive VWFC domains span residues 632-687 (GDCP…PECD) and 692-750 (SQCL…PRCV). An N-linked (GlcNAc...) asparagine glycan is attached at asparagine 708.

As to quaternary structure, interacts with ATRAID; the interaction promotes osteoblast cell differentiation and mineralization. Homotrimer. Binds to PKC beta-1. Interacts with ROBO3.

The protein localises to the cytoplasm. It localises to the nucleus envelope. Its subcellular location is the secreted. Functionally, plays a role in the control of cell growth and differentiation. Promotes osteoblast cell differentiation and terminal mineralization. This chain is Protein kinase C-binding protein NELL1 (Nell1), found in Rattus norvegicus (Rat).